We begin with the raw amino-acid sequence, 252 residues long: Petrobactin import ATP-binding protein YclP (252 aa).

An ABC transporter domain is found at 2–236; the sequence is VEVRNVSKQY…SVLEEIYDMT (235 aa). 34-41 is a binding site for ATP; that stretch reads GPNGAGKS.

The protein belongs to the ABC transporter superfamily. In terms of assembly, the complex is composed of two ATP-binding proteins (YclP), two transmembrane proteins (YclN and YclO) and a solute-binding protein (YclQ).

It is found in the cell membrane. It carries out the reaction a Fe(III)-siderophore(out) + ATP + H2O = a Fe(III)-siderophore(in) + ADP + phosphate + H(+). Its function is as follows. Part of the ABC transporter complex YclNOPQ involved in uptake of ferric-petrobactin. Petrobactin is a photoreactive 3,4-catecholate siderophore produced by many members of the B.cereus group, including B.anthracis. Probably responsible for energy coupling to the transport system. This Bacillus subtilis (strain 168) protein is Petrobactin import ATP-binding protein YclP (yclP).